The primary structure comprises 310 residues: Protein RL1 (310 aa).

Polar residues predominate over residues 1–12 (MPATDTNSTHTT). Residues 1–44 (MPATDTNSTHTTPLHPEDQHTLPLHHSTTQPHVQTSDKHADKQH) are disordered. Residues 35–44 (TSDKHADKQH) are compositionally biased toward basic and acidic residues. The tract at residues 153-159 (LLLARQR) is involved in the interaction with host DDB1. Positions 205-252 (ERPSAGEAQARGLLPRIRITPISTSPRPKPPQPTTSTASHPHATARPD) are disordered. A compositionally biased stretch (low complexity) spans 238-248 (TTSTASHPHAT).

This sequence belongs to the HHV-5 HKLF1 family. In terms of assembly, interacts with host adaptor protein DDB1; this interaction allows RL1 to recruit the cullin4-RING E3 ubiquitin ligase (CRL4) complex and promote SLN11 degradation.

Degrades the host antiviral factor SLFN11 via the cullin4-RING E3 ubiquitin ligase (CRL4) complex. The chain is Protein RL1 (RL1) from Human cytomegalovirus (strain Merlin) (HHV-5).